The chain runs to 398 residues: Enoyl-[acyl-carrier-protein] reductase [NADH] (398 aa).

Residues 48-53, 74-75, 111-112, and 139-140 contribute to the NAD(+) site; these read GSSTGY, FE, DA, and LA. Tyrosine 225 contacts substrate. The Proton donor role is filled by tyrosine 235. NAD(+) contacts are provided by residues lysine 244 and 273–275; that span reads VVT.

This sequence belongs to the TER reductase family. Monomer.

The enzyme catalyses a 2,3-saturated acyl-[ACP] + NAD(+) = a (2E)-enoyl-[ACP] + NADH + H(+). Its pathway is lipid metabolism; fatty acid biosynthesis. In terms of biological role, involved in the final reduction of the elongation cycle of fatty acid synthesis (FAS II). Catalyzes the reduction of a carbon-carbon double bond in an enoyl moiety that is covalently linked to an acyl carrier protein (ACP). The polypeptide is Enoyl-[acyl-carrier-protein] reductase [NADH] (Pseudomonas paraeruginosa (strain DSM 24068 / PA7) (Pseudomonas aeruginosa (strain PA7))).